Here is a 1297-residue protein sequence, read N- to C-terminus: Protein ENHANCED DOWNY MILDEW 2 (1297 aa).

The PHD-type 1; degenerate zinc-finger motif lies at 222 to 281; it reads ESVCAICDNGGEILCCEGSCLRSFHATKKDGEDSLCDSLGFNKMQVEAIQKYFCPNCEHK. Zn(2+) is bound by residues Cys237, Cys241, Cys275, Cys278, Cys285, Cys288, Cys306, Cys311, His316, Cys319, Cys346, and His349. A PHD-type 2; atypical zinc finger spans residues 282–352; the sequence is IHQCFICKNL…EYTCPLHKCS (71 aa). The PHD-type 3; degenerate zinc finger occupies 351–417; it reads CSVCENGEVK…RVLIYCQEHE (67 aa). A Nuclear localization signal 1 motif is present at residues 445 to 452; that stretch reads QRRILESH. 2 disordered regions span residues 471–547 and 562–598; these read CGKA…ARDA and TQEPNPVKPGRVIPVDSKHNKTDSIASKEPGSEIPTL. The span at 475–487 shows a compositional bias: low complexity; it reads SKNSFRSSFPSSK. The Nuclear localization signal 2 motif lies at 492–499; sequence TKKHGLVS. Residues 526–547 are compositionally biased toward basic and acidic residues; that stretch reads KMMEDSREAGKNKLGVKEARDA. 2 short sequence motifs (nuclear localization signal) span residues 610–617 and 979–986; these read MKKATEEI and LKKEGKTK. 2 stretches are compositionally biased toward basic and acidic residues: residues 969–990 and 1096–1109; these read QSDHLSRRSQLKKEGKTKDYSG and EVSRDRPSSVRTSR. Disordered stretches follow at residues 969 to 1017, 1085 to 1109, and 1260 to 1297; these read QSDH…GELS, HGCKVQGTGKPEVSRDRPSSVRTSR, and FPLPPPPPSDFEMSPRGFAPGPNPNYPYMSRSGGWIND.

In terms of assembly, interacts with WNK8 in nucleus; this interaction is involved in developmental processes regulation but not in RPP7-dependent disease resistance. Interacts with EML1 and EML2 in nucleus. Component of the ASI1-AIPP1-EDM2 (AAE) RNA regulatory complex composed of at least AIPP1/EDM3, ASI1 and EDM2 and may contain CPL2, AIPP2 and AIPP3/BDT1. Binds directly to AIPP1/EDM3. Co-associates with AIPP1/EDM3 to histone H3 lysine 9 dimethylation (H3K9me2)-marked chromatin and transcripts at a critical proximal polyadenylation site of RPP7 to hamper proximal transcript polyadeylation/termination. Post-translationally, phosphorylated by WNK8.

It localises to the nucleus. Functionally, cellular antisilencing factor and regulator of genome DNA methylation patterns involved in the regulation of chromatin states. Together with SUVH4, monitors repressive epigenetic marks H3K27me1, H3K9me2, and prevents DNA-methylation at CHG sites, affecting especially the expression of transposons and developmentally important genes. Collaboratively with ASI1 and AIPP1/EDM3, the AAE complex regulates alternative RNA processing (e.g. alternative splicing) and epigenetic silencing (e.g. H3K9me2) of intronic heterochromatin-containing genes as well as genic heterochromatin-containing genes by promoting distal 3' polyadenylation. Epigenetic reader that binds DNA and contributes to transcriptional transposable element (TE) silencing by modulating levels of the repressive post-translational histone modifications (PHM) H3K9me2. In cv. Columbia, required for RPP7-dependent disease resistance against the Hyaloperonospora arabidopsidis isolate Hiks1, by promoting levels of RPP7 via alternative polyadenylation (APA), resulting from cooption of epigenetic information at the TE insertion locus COPIA-R7. Exhibits a global role in NLR (nucleotide-binding, leucine-rich repeat) defense genes epigenetic (e.g. H3K9me2 hallmarks) expression control; promotes the accumulation of RPP7, RPP4 and some other proteins, but mediates the repression of several other NLR products, probably to compensate for fitness penalties caused by defense mechanisms. Regulates development processes such as the formation of leaf pavement cells, leaf expansion, fertility and flowering. Prevents FLC accumulation to control flowering. Modulates stomatal development by regulating the methylation-mediated silencing of ERECTA receptor genes (e.g. ER, ERL1 and ERL2) and preventing cell divisions. The protein is Protein ENHANCED DOWNY MILDEW 2 of Arabidopsis thaliana (Mouse-ear cress).